The primary structure comprises 248 residues: 3-oxoacyl-[acyl-carrier-protein] reductase FabG (248 aa).

NADP(+) contacts are provided by residues 14–17, 65–66, and asparagine 92; these read GGSR and DV. Residue serine 144 participates in substrate binding. The active-site Proton acceptor is tyrosine 157. NADP(+) contacts are provided by residues 157 to 161 and isoleucine 190; that span reads YAAAK.

The protein belongs to the short-chain dehydrogenases/reductases (SDR) family. In terms of assembly, homotetramer.

It catalyses the reaction a (3R)-hydroxyacyl-[ACP] + NADP(+) = a 3-oxoacyl-[ACP] + NADPH + H(+). It functions in the pathway lipid metabolism; fatty acid biosynthesis. Functionally, catalyzes the NADPH-dependent reduction of beta-ketoacyl-ACP substrates to beta-hydroxyacyl-ACP products, the first reductive step in the elongation cycle of fatty acid biosynthesis. This Chlamydia trachomatis serovar D (strain ATCC VR-885 / DSM 19411 / UW-3/Cx) protein is 3-oxoacyl-[acyl-carrier-protein] reductase FabG (fabG).